Reading from the N-terminus, the 181-residue chain is MAVFEGSFVNASQFRLAVVIGRFNDLVCEKLLAGCQDCLKRHGVDPDPQGTQVDYAWVPGSFEIPLVARQLALTGRYDAIICLGAVIRGQTPHFDYVASEVAKGVAATSLQTGIPIAFGVLTVDNLQQALERAGIKSNLGWNYALSALEMASLMHQIRSTTGEVPRQTLPLAAAPSNFAGT.

5-amino-6-(D-ribitylamino)uracil contacts are provided by residues Phe-23, 61-63 (SFE), and 85-87 (AVI). 90 to 91 (QT) serves as a coordination point for (2S)-2-hydroxy-3-oxobutyl phosphate. Catalysis depends on His-93, which acts as the Proton donor. Phe-118 lines the 5-amino-6-(D-ribitylamino)uracil pocket. Position 132 (Arg-132) interacts with (2S)-2-hydroxy-3-oxobutyl phosphate.

It belongs to the DMRL synthase family.

The enzyme catalyses (2S)-2-hydroxy-3-oxobutyl phosphate + 5-amino-6-(D-ribitylamino)uracil = 6,7-dimethyl-8-(1-D-ribityl)lumazine + phosphate + 2 H2O + H(+). It participates in cofactor biosynthesis; riboflavin biosynthesis; riboflavin from 2-hydroxy-3-oxobutyl phosphate and 5-amino-6-(D-ribitylamino)uracil: step 1/2. Functionally, catalyzes the formation of 6,7-dimethyl-8-ribityllumazine by condensation of 5-amino-6-(D-ribitylamino)uracil with 3,4-dihydroxy-2-butanone 4-phosphate. This is the penultimate step in the biosynthesis of riboflavin. This is 6,7-dimethyl-8-ribityllumazine synthase from Synechococcus elongatus (strain ATCC 33912 / PCC 7942 / FACHB-805) (Anacystis nidulans R2).